A 327-amino-acid polypeptide reads, in one-letter code: Mitochondrial coenzyme A transporter SLC25A42 (327 aa).

Solcar repeat units follow at residues 34-120, 132-217, and 227-315; these read KSIL…YKKL, LTPI…LKKL, and PYPF…TQIL. 6 helical membrane passes run 36–56, 92–112, 138–158, 189–209, 233–253, and 296–316; these read ILNS…AVAP, LWRG…IQFC, LLAG…LDLV, LYRG…ISFF, LLFG…LDVV, and VKGP…QILL.

This sequence belongs to the mitochondrial carrier (TC 2.A.29) family.

Its subcellular location is the mitochondrion inner membrane. The enzyme catalyses ADP(out) + CoA(in) = ADP(in) + CoA(out). It carries out the reaction 3'-dephospho-CoA(in) + ADP(out) = 3'-dephospho-CoA(out) + ADP(in). The catalysed reaction is adenosine 3',5'-bisphosphate(in) + ADP(out) = adenosine 3',5'-bisphosphate(out) + ADP(in). It catalyses the reaction AMP(in) + ADP(out) = AMP(out) + ADP(in). The enzyme catalyses dADP(in) + ADP(out) = dADP(out) + ADP(in). It carries out the reaction ADP(in) + ATP(out) = ADP(out) + ATP(in). Its function is as follows. Mitochondrial carrier mediating the transport of coenzyme A (CoA) in mitochondria in exchange for intramitochondrial (deoxy)adenine nucleotides and adenosine 3',5'-diphosphate. The protein is Mitochondrial coenzyme A transporter SLC25A42 (slc25a42) of Xenopus tropicalis (Western clawed frog).